The sequence spans 308 residues: D-alanine--D-alanine ligase (308 aa).

Residues 100–295 (KEVFVRNGLP…FDGLIGRLIE (196 aa)) form the ATP-grasp domain. 127-180 (PFAFPAFIKSNNGGSSLALHRVSCPGELARALDELFTRGGEAIIEPAVEGVEVT) contacts ATP. Residues Asp249, Glu262, and Asn264 each coordinate Mg(2+).

The protein belongs to the D-alanine--D-alanine ligase family. It depends on Mg(2+) as a cofactor. Mn(2+) serves as cofactor.

The protein resides in the cytoplasm. The catalysed reaction is 2 D-alanine + ATP = D-alanyl-D-alanine + ADP + phosphate + H(+). Its pathway is cell wall biogenesis; peptidoglycan biosynthesis. Functionally, cell wall formation. The sequence is that of D-alanine--D-alanine ligase from Oleidesulfovibrio alaskensis (strain ATCC BAA-1058 / DSM 17464 / G20) (Desulfovibrio alaskensis).